Here is a 696-residue protein sequence, read N- to C-terminus: Golgi integral membrane protein 4 (696 aa).

A lipid anchor (N-myristoyl glycine) is attached at G2. At 2-12 (GNGMCSRKQKR) the chain is on the cytoplasmic side. Residues 13–33 (IFQTLLLLTVVFGFLYGAMLY) traverse the membrane as a helical; Signal-anchor for type II membrane protein segment. Topologically, residues 34-696 (YELQTQLRKA…AEKSHRRAEM (663 aa)) are lumenal. Positions 35–244 (ELQTQLRKAE…KQLKDTLNRI (210 aa)) form a coiled coil. The interval 38–107 (TQLRKAEAVA…ETLNKGRQDS (70 aa)) is golgi targeting. The interval 80 to 175 (LEHKKAKEDF…QELSKLKETV (96 aa)) is endosome targeting. Disordered regions lie at residues 122 to 145 (KSQH…QGED), 244 to 391 (IPSL…HARA), and 427 to 696 (LREH…RAEM). Residues 123 to 145 (SQHEELKKQHSDLEEEHRKQGED) are compositionally biased toward basic and acidic residues. Residues 176 to 248 (YNLREENRQL…DTLNRIPSLR (73 aa)) are golgi targeting. The segment covering 254 to 269 (EQQNVTQVAHSPQGYN) has biased composition (polar residues). An N-linked (GlcNAc...) asparagine glycan is attached at N257. 5 stretches are compositionally biased toward basic and acidic residues: residues 271-281 (AREKPTREVQE), 298-313 (RAED…KEAE), 324-343 (EVER…RKAL), 355-364 (EHLEEEHDPS), and 370-380 (REWKEQHEQRE). S364 carries the post-translational modification Phosphoserine. Positions 436 to 453 (QQRLQGHLLRQQEQQQQQ) are enriched in low complexity. Basic and acidic residues-rich tracts occupy residues 464–476 (AELE…HQEQ) and 505–545 (AYER…RAAV). S538 carries the post-translational modification Phosphoserine. The span at 604-626 (QQEDNVDEQYQEEAEEEVQEDLT) shows a compositional bias: acidic residues. A Phosphotyrosine modification is found at Y613. Residue T626 is modified to Phosphothreonine. 2 stretches are compositionally biased toward basic and acidic residues: residues 627–638 (EEKKRELEHNAE) and 661–672 (RDDNRPKGREEH). Y673 is modified (phosphotyrosine). Residues 673–683 (YEEEEEEEEDG) show a composition bias toward acidic residues.

The protein belongs to the GOLIM4 family. Phosphorylated probably by c-AMP-dependent kinases in its lumenal part. In terms of processing, O-glycosylated; modified by sialic acid residues. Post-translationally, N-glycosylated; N-glycans are probably of the complex type and modified by sialic acid residues.

The protein resides in the golgi apparatus. It is found in the golgi stack membrane. It localises to the endosome membrane. Its subcellular location is the membrane. Functionally, plays a role in endosome to Golgi protein trafficking; mediates protein transport along the late endosome-bypass pathway from the early endosome to the Golgi. The protein is Golgi integral membrane protein 4 (GOLIM4) of Homo sapiens (Human).